The chain runs to 909 residues: Probable dipeptidyl-aminopeptidase B (909 aa).

The segment at 1-63 (MRVGSRINDE…HNHNGRAQGN (63 aa)) is disordered. Residues 1 to 94 (MRVGSRINDE…NGKSNQRRTL (94 aa)) are Cytoplasmic-facing. The segment covering 27 to 38 (DSSSTASISLTL) has biased composition (low complexity). Residues 95-115 (IVFWLLVALCVGGWAVAFLFF) traverse the membrane as a helical; Signal-anchor for type II membrane protein segment. Residues 116–909 (VTSPGNKTST…YSNFLPIRSF (794 aa)) lie on the Vacuolar side of the membrane. Asparagine 121 carries N-linked (GlcNAc...) asparagine glycosylation. Over residues 123–134 (TSTSPHSGSNSP) the composition is skewed to polar residues. Residues 123 to 144 (TSTSPHSGSNSPEGDVTKPGIP) are disordered. N-linked (GlcNAc...) asparagine glycans are attached at residues asparagine 207, asparagine 303, and asparagine 355. Serine 760 acts as the Charge relay system in catalysis. Residues asparagine 814, asparagine 819, and asparagine 822 are each glycosylated (N-linked (GlcNAc...) asparagine). Catalysis depends on charge relay system residues aspartate 837 and histidine 870. A glycan (N-linked (GlcNAc...) asparagine) is linked at asparagine 888.

It belongs to the peptidase S9B family.

It localises to the vacuole membrane. The enzyme catalyses Release of an N-terminal dipeptide, Xaa-Yaa-|-Zaa-, from a polypeptide, preferentially when Yaa is Pro, provided Zaa is neither Pro nor hydroxyproline.. Functionally, type IV dipeptidyl-peptidase which removes N-terminal dipeptides sequentially from polypeptides having unsubstituted N-termini provided that the penultimate residue is proline. The chain is Probable dipeptidyl-aminopeptidase B (DAPB) from Arthroderma benhamiae (strain ATCC MYA-4681 / CBS 112371) (Trichophyton mentagrophytes).